Reading from the N-terminus, the 114-residue chain is MNVYLLLASGILCALMTVFWKYRRFQRNTGEMSSNSTALALVRPSSTGLINSNTDNNLSVYDLSRDILNNFPHSIAMQKRILVNLTTVENKLVELEHILVSKGFRSASAHRKST.

Over Met1–Tyr4 the chain is Cytoplasmic. A helical; Signal-anchor for type II membrane protein membrane pass occupies residues Leu5 to Tyr22. Residues Arg23 to Thr114 lie on the Extracellular side of the membrane. Residue Asn84 is glycosylated (N-linked (GlcNAc...) asparagine).

It localises to the cell membrane. This Macaca fascicularis (Crab-eating macaque) protein is Kita-kyushu lung cancer antigen 1 homolog (CT83).